Consider the following 362-residue polypeptide: MILSRLLIRHFRNIEQADLPLADGFNFLVGPNGSGKTSILEAIYTLGHGRAFRSAQANRVIQHDENAFILHGRLSGLDEESRGYSIGLSKDREGNSTVRIDGSDGHKIAELAKLLPMQLITPEGFTLLNGGPKYRRAFIDWGCFHNEPRFFAAWSDLKRVLKQRNAALRQASSYRQLLPWDKELILLTEQISQWRAEYTEDIAKDIEETCQLFLPEFTLKVSFQRGWDKETDYAQLLERQFERDKVLSYTSLGAHKADLRIRANGTPVEDMLSRGQLKLLMCALRLAQGEYFTRKNGQRCLYLLDDFASELDANRRQLLAERLKSTQAQVFVSAITSGQVKDMLDVNSRLFSVEHGKIEVKP.

30-37 is an ATP binding site; that stretch reads GPNGSGKT.

This sequence belongs to the RecF family.

Its subcellular location is the cytoplasm. The RecF protein is involved in DNA metabolism; it is required for DNA replication and normal SOS inducibility. RecF binds preferentially to single-stranded, linear DNA. It also seems to bind ATP. The chain is DNA replication and repair protein RecF from Proteus mirabilis (strain HI4320).